We begin with the raw amino-acid sequence, 211 residues long: Probable nicotinate-nucleotide adenylyltransferase (211 aa).

It belongs to the NadD family.

The enzyme catalyses nicotinate beta-D-ribonucleotide + ATP + H(+) = deamido-NAD(+) + diphosphate. It functions in the pathway cofactor biosynthesis; NAD(+) biosynthesis; deamido-NAD(+) from nicotinate D-ribonucleotide: step 1/1. In terms of biological role, catalyzes the reversible adenylation of nicotinate mononucleotide (NaMN) to nicotinic acid adenine dinucleotide (NaAD). The chain is Probable nicotinate-nucleotide adenylyltransferase from Shewanella frigidimarina (strain NCIMB 400).